The chain runs to 296 residues: tRNA dimethylallyltransferase (296 aa).

8–15 (GPTGSGKT) is an ATP binding site. 10-15 (TGSGKT) contacts substrate. Residues 32–35 (DSRQ) are interaction with substrate tRNA.

Belongs to the IPP transferase family. In terms of assembly, monomer. Mg(2+) serves as cofactor.

The catalysed reaction is adenosine(37) in tRNA + dimethylallyl diphosphate = N(6)-dimethylallyladenosine(37) in tRNA + diphosphate. Catalyzes the transfer of a dimethylallyl group onto the adenine at position 37 in tRNAs that read codons beginning with uridine, leading to the formation of N6-(dimethylallyl)adenosine (i(6)A). This chain is tRNA dimethylallyltransferase, found in Leptospira biflexa serovar Patoc (strain Patoc 1 / Ames).